A 500-amino-acid polypeptide reads, in one-letter code: Glycerol kinase (500 aa).

T11 serves as a coordination point for ADP. The ATP site is built by T11, T12, and S13. Residue T11 participates in sn-glycerol 3-phosphate binding. R15 is an ADP binding site. The sn-glycerol 3-phosphate site is built by R81, E82, Y133, and D242. Glycerol is bound by residues R81, E82, Y133, D242, and Q243. Residues T264 and G307 each contribute to the ADP site. Residues T264, G307, Q311, and G411 each coordinate ATP. ADP is bound at residue G411.

This sequence belongs to the FGGY kinase family.

The catalysed reaction is glycerol + ATP = sn-glycerol 3-phosphate + ADP + H(+). The protein operates within polyol metabolism; glycerol degradation via glycerol kinase pathway; sn-glycerol 3-phosphate from glycerol: step 1/1. With respect to regulation, inhibited by fructose 1,6-bisphosphate (FBP). Key enzyme in the regulation of glycerol uptake and metabolism. Catalyzes the phosphorylation of glycerol to yield sn-glycerol 3-phosphate. In Bradyrhizobium sp. (strain ORS 278), this protein is Glycerol kinase.